A 277-amino-acid polypeptide reads, in one-letter code: Large ribosomal subunit protein uL2 (277 aa).

Residues 222 to 277 are disordered; sequence GVTMNPVDHPHGGGEGRTSGGRNPVTPWGFPTKGKKTRNNKATDKFIVSSRHKRKK.

Belongs to the universal ribosomal protein uL2 family. As to quaternary structure, part of the 50S ribosomal subunit. Forms a bridge to the 30S subunit in the 70S ribosome.

One of the primary rRNA binding proteins. Required for association of the 30S and 50S subunits to form the 70S ribosome, for tRNA binding and peptide bond formation. It has been suggested to have peptidyltransferase activity; this is somewhat controversial. Makes several contacts with the 16S rRNA in the 70S ribosome. The chain is Large ribosomal subunit protein uL2 from Xanthobacter autotrophicus (strain ATCC BAA-1158 / Py2).